Reading from the N-terminus, the 87-residue chain is ParB-like nuclease domain-containing protein YnaK (87 aa).

This is ParB-like nuclease domain-containing protein YnaK (ynaK) from Escherichia coli (strain K12).